Here is a 615-residue protein sequence, read N- to C-terminus: Medium-chain acyl-CoA ligase ACSF2, mitochondrial (615 aa).

The N-terminal 41 residues, 1–41 (MAVYHGMLRFGRLCIASLGARGPRTLLSRPRPNSKLQSVRA), are a transit peptide targeting the mitochondrion. K179 carries the N6-acetyllysine modification. N6-acetyllysine; alternate is present on K182. K182 is subject to N6-succinyllysine; alternate. N6-acetyllysine is present on K199. 263–271 (TSGTTGNPK) provides a ligand contact to ATP. K340 and K398 each carry N6-acetyllysine. K478 is subject to N6-succinyllysine. 2 residues coordinate ATP: D493 and R508. Position 510 is an N6-acetyllysine (K510). N6-acetyllysine; alternate is present on residues K544 and K570. N6-succinyllysine; alternate occurs at positions 544 and 570. Residue K599 participates in ATP binding. N6-succinyllysine is present on K599.

The protein belongs to the ATP-dependent AMP-binding enzyme family.

The protein resides in the mitochondrion. It catalyses the reaction a medium-chain fatty acid + ATP + CoA = a medium-chain fatty acyl-CoA + AMP + diphosphate. The enzyme catalyses octanoate + ATP + CoA = octanoyl-CoA + AMP + diphosphate. Its function is as follows. Acyl-CoA synthases catalyze the initial reaction in fatty acid metabolism, by forming a thioester with CoA. Has some preference toward medium-chain substrates. Plays a role in adipocyte differentiation. The sequence is that of Medium-chain acyl-CoA ligase ACSF2, mitochondrial from Mus musculus (Mouse).